A 307-amino-acid chain; its full sequence is Regulating synaptic membrane exocytosis protein 3 (307 aa).

The segment at 86–120 is disordered; it reads STETGIAVEMRSRVTRQGSRESTDGSTNSNSSEGT. A compositionally biased stretch (polar residues) spans 109-119; the sequence is DGSTNSNSSEG. In terms of domain architecture, C2 spans 155–273; sequence PMGDVHIAIM…DLSAAVTGWY (119 aa). A phosphoserine mark is found at serine 294 and serine 297.

As to quaternary structure, binds PPFIA3. Does not bind RAB3.

The protein resides in the synapse. Its function is as follows. Regulates synaptic membrane exocytosis. This is Regulating synaptic membrane exocytosis protein 3 (Rims3) from Mus musculus (Mouse).